The primary structure comprises 254 residues: 5'-nucleotidase SurE (254 aa).

Residues D8, D9, S38, and N91 each coordinate a divalent metal cation.

The protein belongs to the SurE nucleotidase family. The cofactor is a divalent metal cation.

Its subcellular location is the cytoplasm. The catalysed reaction is a ribonucleoside 5'-phosphate + H2O = a ribonucleoside + phosphate. In terms of biological role, nucleotidase that shows phosphatase activity on nucleoside 5'-monophosphates. This chain is 5'-nucleotidase SurE, found in Anaeromyxobacter sp. (strain Fw109-5).